A 348-amino-acid polypeptide reads, in one-letter code: Dihydroorotase (348 aa).

2 residues coordinate Zn(2+): H14 and H16. Substrate-binding positions include 16-18 (HLR) and N42. Zn(2+) contacts are provided by K100, H137, and H175. Residue K100 is modified to N6-carboxylysine. Residue H137 participates in substrate binding. L220 provides a ligand contact to substrate. D248 contacts Zn(2+). Residue D248 is part of the active site. 2 residues coordinate substrate: H252 and A264.

This sequence belongs to the metallo-dependent hydrolases superfamily. DHOase family. Class II DHOase subfamily. Homodimer. Zn(2+) is required as a cofactor.

It carries out the reaction (S)-dihydroorotate + H2O = N-carbamoyl-L-aspartate + H(+). It functions in the pathway pyrimidine metabolism; UMP biosynthesis via de novo pathway; (S)-dihydroorotate from bicarbonate: step 3/3. Its function is as follows. Catalyzes the reversible cyclization of carbamoyl aspartate to dihydroorotate. This is Dihydroorotase from Pseudomonas putida (strain ATCC 47054 / DSM 6125 / CFBP 8728 / NCIMB 11950 / KT2440).